A 403-amino-acid polypeptide reads, in one-letter code: Ribosomal RNA large subunit methyltransferase I (403 aa).

Residues 9 to 88 (YPRLVLSKGR…ESIDIAFFTR (80 aa)) form the PUA domain.

It belongs to the methyltransferase superfamily. RlmI family.

The protein resides in the cytoplasm. It carries out the reaction cytidine(1962) in 23S rRNA + S-adenosyl-L-methionine = 5-methylcytidine(1962) in 23S rRNA + S-adenosyl-L-homocysteine + H(+). Specifically methylates the cytosine at position 1962 (m5C1962) of 23S rRNA. The chain is Ribosomal RNA large subunit methyltransferase I from Salmonella paratyphi A (strain ATCC 9150 / SARB42).